The following is a 160-amino-acid chain: MIKKRKKKSYTEVYALGQYISMSAHKARRVIDQIRGRSYEEALMILELMPYRGCYPIFKLVYSAAANASHNKGFKETNLVISKAEVNQGNTVKKLKPRARGRSYPIKRSTCHITIVLEDISFYQQNEEYLMYLKKPGCSNENRNLTCYDTYSSGGLWDKK.

It belongs to the universal ribosomal protein uL22 family. Part of the 50S ribosomal subunit.

It localises to the plastid. The protein localises to the chloroplast. This protein binds specifically to 23S rRNA. In terms of biological role, the globular domain of the protein is located near the polypeptide exit tunnel on the outside of the subunit, while an extended beta-hairpin is found that lines the wall of the exit tunnel in the center of the 70S ribosome. This Capsella bursa-pastoris (Shepherd's purse) protein is Large ribosomal subunit protein uL22c (rpl22).